A 333-amino-acid chain; its full sequence is Lipoyl synthase (333 aa).

The interval 1 to 29 (MTDSASGASAVANIATPSNEPYDATRKQK) is disordered. [4Fe-4S] cluster-binding residues include cysteine 80, cysteine 85, cysteine 91, cysteine 106, cysteine 110, cysteine 113, and serine 320. Positions 91-309 (CFGKGTATFM…EEKAYEMGFT (219 aa)) constitute a Radical SAM core domain.

This sequence belongs to the radical SAM superfamily. Lipoyl synthase family. Requires [4Fe-4S] cluster as cofactor.

It is found in the cytoplasm. The enzyme catalyses [[Fe-S] cluster scaffold protein carrying a second [4Fe-4S](2+) cluster] + N(6)-octanoyl-L-lysyl-[protein] + 2 oxidized [2Fe-2S]-[ferredoxin] + 2 S-adenosyl-L-methionine + 4 H(+) = [[Fe-S] cluster scaffold protein] + N(6)-[(R)-dihydrolipoyl]-L-lysyl-[protein] + 4 Fe(3+) + 2 hydrogen sulfide + 2 5'-deoxyadenosine + 2 L-methionine + 2 reduced [2Fe-2S]-[ferredoxin]. The protein operates within protein modification; protein lipoylation via endogenous pathway; protein N(6)-(lipoyl)lysine from octanoyl-[acyl-carrier-protein]: step 2/2. Functionally, catalyzes the radical-mediated insertion of two sulfur atoms into the C-6 and C-8 positions of the octanoyl moiety bound to the lipoyl domains of lipoate-dependent enzymes, thereby converting the octanoylated domains into lipoylated derivatives. The chain is Lipoyl synthase from Ralstonia nicotianae (strain ATCC BAA-1114 / GMI1000) (Ralstonia solanacearum).